The following is a 58-amino-acid chain: Large ribosomal subunit protein uL30 (58 aa).

The protein belongs to the universal ribosomal protein uL30 family. In terms of assembly, part of the 50S ribosomal subunit.

In Novosphingobium aromaticivorans (strain ATCC 700278 / DSM 12444 / CCUG 56034 / CIP 105152 / NBRC 16084 / F199), this protein is Large ribosomal subunit protein uL30.